The primary structure comprises 531 residues: SWI/SNF-related matrix-associated actin-dependent regulator of chromatin subfamily D member 2 (531 aa).

Positions 20-85 are disordered; sequence AVAAALGAPP…MSPGSRMPMA (66 aa). The segment covering 34–45 has biased composition (low complexity); that stretch reads PGMLPSPALRGP. An asymmetric dimethylarginine mark is found at R81 and R104. S203 is modified (phosphoserine). The tract at residues 205–226 is disordered; that stretch reads SKADGDNAGTAGTPGGTPAADK. Positions 210–225 are enriched in low complexity; that stretch reads DNAGTAGTPGGTPAAD. T217 carries the post-translational modification Phosphothreonine. Residue K226 forms a Glycyl lysine isopeptide (Lys-Gly) (interchain with G-Cter in SUMO2) linkage. The 78-residue stretch at 306–383 folds into the SWIB/MDM2 domain; it reads HQPPQYKLDP…PMKLAGLLQH (78 aa).

Belongs to the SMARCD family. In terms of assembly, component of the multiprotein chromatin-remodeling complexes SWI/SNF: SWI/SNF-A (BAF), SWI/SNF-B (PBAF) and related complexes. The canonical complex contains a catalytic subunit (either SMARCA4/BRG1/BAF190A or SMARCA2/BRM/BAF190B), and at least SMARCE1, ACTL6A/BAF53, SMARCC1/BAF155, SMARCC2/BAF170, and SMARCB1/SNF5/BAF47. Other subunits specific to each of the complexes may also be present permitting several possible combinations developmentally and tissue specific. Component of the BAF complex, which includes at least actin (ACTB), ARID1A/BAF250A, ARID1B/BAF250B, SMARCA2/BRM, SMARCA4/BRG1, ACTL6A/BAF53, ACTL6B/BAF53B, SMARCE1/BAF57, SMARCC1/BAF155, SMARCC2/BAF170, SMARCB1/SNF5/INI1, and one or more SMARCD1/BAF60A, SMARCD2/BAF60B, or SMARCD3/BAF60C. In muscle cells, the BAF complex also contains DPF3. Component of the SWI/SNF-B (PBAF) chromatin remodeling complex, at least composed of SMARCA4/BRG1, SMARCB1/BAF47/SNF5, ACTL6A/BAF53A or ACTL6B/BAF53B, SMARCE1/BAF57, SMARCD1/BAF60A, SMARCD2/BAF60B, perhaps SMARCD3/BAF60C, SMARCC1/BAF155, SMARCC2/BAF170, PBRM1/BAF180, ARID2/BAF200 and actin (ACTB). Interacts with UNKL. Interacts with CEBPE. In terms of processing, ubiquitinated through a signaling process involving RAC1 and the RING finger protein UNKL.

The protein localises to the nucleus. Its function is as follows. Involved in transcriptional activation and repression of select genes by chromatin remodeling (alteration of DNA-nucleosome topology). Component of SWI/SNF chromatin remodeling complexes that carry out key enzymatic activities, changing chromatin structure by altering DNA-histone contacts within a nucleosome in an ATP-dependent manner. Critical regulator of myeloid differentiation, controlling granulocytopoiesis and the expression of genes involved in neutrophil granule formation. The chain is SWI/SNF-related matrix-associated actin-dependent regulator of chromatin subfamily D member 2 (Smarcd2) from Mus musculus (Mouse).